Reading from the N-terminus, the 485-residue chain is Acyltransferase cm3D (485 aa).

Residue His-169 is the Proton acceptor of the active site.

The protein belongs to the plant acyltransferase family. As to quaternary structure, monomer.

The protein operates within secondary metabolite biosynthesis. Acyltransferase; part of the gene cluster that mediates the biosynthesis of beauveriolides I and III, cyclodepsipeptides acting as inhibitors of the acyl-CoA:cholesterol acyltransferase. The HR-PKS cm3B initiates the biosynthesis of beauveriolides by iteratively catalyzing the formation of the linear polyketide chain. The ATP-dependent acetyl-CoA ligase cm3D converts the polyketide carboxylic acid to a CoA thioester which id shuttled to the first T domain in the NRPS cm3A by the acetyltransferase cm3C. Cm3A contains 13 domains and assembles the polyketide chain, L-phenylalanine, L-alanine, and D-leucine (or D-allo-isoleucine) to form beauveriolide I (or beauveriolide III). The production of both beauveriolides I and III suggests the substrate adaptability of cm3B, using different amino acids as substrates. The chain is Acyltransferase cm3D from Cordyceps militaris (strain CM01) (Caterpillar fungus).